Consider the following 167-residue polypeptide: Small ribosomal subunit protein uS5 (167 aa).

The S5 DRBM domain maps to 12-75; that stretch reads LNEKLIAVNR…EKARRNIRDV (64 aa).

This sequence belongs to the universal ribosomal protein uS5 family. Part of the 30S ribosomal subunit. Contacts proteins S4 and S8.

In terms of biological role, with S4 and S12 plays an important role in translational accuracy. Its function is as follows. Located at the back of the 30S subunit body where it stabilizes the conformation of the head with respect to the body. This is Small ribosomal subunit protein uS5 from Psychromonas ingrahamii (strain DSM 17664 / CCUG 51855 / 37).